A 263-amino-acid polypeptide reads, in one-letter code: 3-methyl-2-oxobutanoate hydroxymethyltransferase (263 aa).

The Mg(2+) site is built by D45 and D84. Residues 45–46, D84, and K112 contribute to the 3-methyl-2-oxobutanoate site; that span reads DS. Position 114 (E114) interacts with Mg(2+). The Proton acceptor role is filled by E180.

It belongs to the PanB family. As to quaternary structure, homodecamer; pentamer of dimers. Requires Mg(2+) as cofactor.

It is found in the cytoplasm. It catalyses the reaction 3-methyl-2-oxobutanoate + (6R)-5,10-methylene-5,6,7,8-tetrahydrofolate + H2O = 2-dehydropantoate + (6S)-5,6,7,8-tetrahydrofolate. It functions in the pathway cofactor biosynthesis; (R)-pantothenate biosynthesis; (R)-pantoate from 3-methyl-2-oxobutanoate: step 1/2. In terms of biological role, catalyzes the reversible reaction in which hydroxymethyl group from 5,10-methylenetetrahydrofolate is transferred onto alpha-ketoisovalerate to form ketopantoate. This is 3-methyl-2-oxobutanoate hydroxymethyltransferase from Klebsiella pneumoniae subsp. pneumoniae (strain ATCC 700721 / MGH 78578).